Consider the following 171-residue polypeptide: Large ribosomal subunit protein uL10 (171 aa).

This sequence belongs to the universal ribosomal protein uL10 family. As to quaternary structure, part of the ribosomal stalk of the 50S ribosomal subunit. The N-terminus interacts with L11 and the large rRNA to form the base of the stalk. The C-terminus forms an elongated spine to which L12 dimers bind in a sequential fashion forming a multimeric L10(L12)X complex.

In terms of biological role, forms part of the ribosomal stalk, playing a central role in the interaction of the ribosome with GTP-bound translation factors. In Rhizorhabdus wittichii (strain DSM 6014 / CCUG 31198 / JCM 15750 / NBRC 105917 / EY 4224 / RW1) (Sphingomonas wittichii), this protein is Large ribosomal subunit protein uL10.